The chain runs to 94 residues: MPVIAGGILAALLLLIVVVLCLYFKIHNALKAAKEPEAVAVKNHNPDKVWWAKNSQAKTIATESCPALQCCEGYRMCASFDSLPPCCCDINEGL.

Positions 1–21 (MPVIAGGILAALLLLIVVVLC) are cleaved as a signal peptide.

Belongs to the FAM24 family.

It is found in the secreted. This is Protein FAM24B (FAM24B) from Homo sapiens (Human).